We begin with the raw amino-acid sequence, 428 residues long: Glucose-1-phosphate adenylyltransferase (428 aa).

Alpha-D-glucose 1-phosphate contacts are provided by residues Tyr114, Gly179, 194 to 195 (EK), and Ser212.

It belongs to the bacterial/plant glucose-1-phosphate adenylyltransferase family. Homotetramer.

It catalyses the reaction alpha-D-glucose 1-phosphate + ATP + H(+) = ADP-alpha-D-glucose + diphosphate. Its pathway is glycan biosynthesis; glycogen biosynthesis. Involved in the biosynthesis of ADP-glucose, a building block required for the elongation reactions to produce glycogen. Catalyzes the reaction between ATP and alpha-D-glucose 1-phosphate (G1P) to produce pyrophosphate and ADP-Glc. This Yersinia pseudotuberculosis serotype IB (strain PB1/+) protein is Glucose-1-phosphate adenylyltransferase.